The following is a 166-amino-acid chain: NAD(P)H-quinone oxidoreductase subunit I, chloroplastic (166 aa).

2 consecutive 4Fe-4S ferredoxin-type domains span residues 55–84 and 95–124; these read GRIH…VDWK and LNYS…MTEE. [4Fe-4S] cluster contacts are provided by C64, C67, C70, C74, C104, C107, C110, and C114.

It belongs to the complex I 23 kDa subunit family. As to quaternary structure, NDH is composed of at least 16 different subunits, 5 of which are encoded in the nucleus. [4Fe-4S] cluster is required as a cofactor.

The protein resides in the plastid. It is found in the chloroplast thylakoid membrane. It carries out the reaction a plastoquinone + NADH + (n+1) H(+)(in) = a plastoquinol + NAD(+) + n H(+)(out). The catalysed reaction is a plastoquinone + NADPH + (n+1) H(+)(in) = a plastoquinol + NADP(+) + n H(+)(out). Its function is as follows. NDH shuttles electrons from NAD(P)H:plastoquinone, via FMN and iron-sulfur (Fe-S) centers, to quinones in the photosynthetic chain and possibly in a chloroplast respiratory chain. The immediate electron acceptor for the enzyme in this species is believed to be plastoquinone. Couples the redox reaction to proton translocation, and thus conserves the redox energy in a proton gradient. This Picradeniopsis absinthifolia (Hairyseed bahia) protein is NAD(P)H-quinone oxidoreductase subunit I, chloroplastic.